Here is a 534-residue protein sequence, read N- to C-terminus: 5'-nucleotidase domain-containing protein 3 (534 aa).

D104 (nucleophile) is an active-site residue. Mg(2+) is bound by residues D104 and D106. The active-site Proton donor is the D106. 234 to 242 (KEAIRDVHV) lines the substrate pocket. Residue D372 participates in Mg(2+) binding.

The protein belongs to the 5'(3')-deoxyribonucleotidase family. It depends on Mg(2+) as a cofactor.

The sequence is that of 5'-nucleotidase domain-containing protein 3 (nt5dc3) from Xenopus tropicalis (Western clawed frog).